Consider the following 306-residue polypeptide: Histone-lysine N-methyltransferase SETMAR (306 aa).

Positions 60-123 constitute a Pre-SET domain; the sequence is PGCACLKTPC…RCRNRVVQWG (64 aa). Cys62, Cys64, Cys69, Cys74, Cys76, Cys105, Cys109, Cys111, and Cys115 together coordinate Zn(2+). The 125-residue stretch at 126-250 folds into the SET domain; it reads FHLQVFKTDH…PEEELSYDYS (125 aa). S-adenosyl-L-methionine is bound by residues 136–138, Tyr179, Arg207, and 210–211; these read KGW and NH. Zn(2+) is bound by residues Cys213, Cys274, Cys276, and Cys281. Residues 270–286 form the Post-SET domain; sequence LRKPCYCGARSCAAFLP.

It belongs to the class V-like SAM-binding methyltransferase superfamily.

Its subcellular location is the nucleus. The protein localises to the chromosome. It carries out the reaction L-lysyl(36)-[histone H3] + 2 S-adenosyl-L-methionine = N(6),N(6)-dimethyl-L-lysyl(36)-[histone H3] + 2 S-adenosyl-L-homocysteine + 2 H(+). In terms of biological role, histone methyltransferase that methylates 'Lys-4' and 'Lys-36' of histone H3, 2 specific tags for epigenetic transcriptional activation. Specifically mediates dimethylation of H3 'Lys-36'. This Bos taurus (Bovine) protein is Histone-lysine N-methyltransferase SETMAR.